Reading from the N-terminus, the 657-residue chain is C4-dicarboxylate transport sensor protein DctS (657 aa).

At 1-26 (MRDTTGGPAGAEVWTVPGLLGARKLD) the chain is on the cytoplasmic side. A helical membrane pass occupies residues 27–51 (LLALIPLVAIVALMTLVGALLFAVA). Residues 52–252 (QSDANRARAK…AYDAPDAFGN (201 aa)) are Periplasmic-facing. Residues 253–273 (AALLAAIGALSVFAVLAMVVL) traverse the membrane as a helical segment. At 274-657 (HRNALRRRMA…LPVPQEGAPA (384 aa)) the chain is on the cytoplasmic side. In terms of domain architecture, PAS spans 289 to 361 (AEMAFRRAME…ARQRQLIEGQ (73 aa)). In terms of domain architecture, PAC spans 365 to 417 (QAFETRFRRSDGSEIEVQVFEAPLIDAGGRHRGWMGSVIDITQAKQAARLARA). The inter-domain linker stretch occupies residues 407-422 (QAKQAARLARAQDESL). The 216-residue stretch at 437–652 (TLAHELNQPL…VFTVTLPVPQ (216 aa)) folds into the Histidine kinase domain. Histidine 440 is modified (phosphohistidine; by autocatalysis).

The protein localises to the cell inner membrane. It catalyses the reaction ATP + protein L-histidine = ADP + protein N-phospho-L-histidine.. Its function is as follows. Member of the two-component regulatory system DctS/DctR involved in the transport of C4-dicarboxylates. DctS functions as a membrane-associated protein kinase that phosphorylates DctR in response to environmental signals. This is C4-dicarboxylate transport sensor protein DctS (dctS) from Rhodobacter capsulatus (Rhodopseudomonas capsulata).